The following is a 324-amino-acid chain: Fe-S cluster assembly protein dre2 (324 aa).

The tract at residues 28-158 is N-terminal SAM-like domain; the sequence is GSPSKRTLLL…KMDQPKSFAI (131 aa). The segment at 159-217 is linker; it reads PLRRNGKKKDAAKTETFAPAPAPAPPVQPVTVGMINNDDDYENDDDLIDEDTLLSDEDL. Residues C226, C237, C240, and C242 each contribute to the [2Fe-2S] cluster site. Residues 226-242 are fe-S binding site A; that stretch reads CQPKPGRRRRACKDCTC. [4Fe-4S] cluster contacts are provided by C287, C290, C298, and C301. 2 short sequence motifs (cx2C motif) span residues 287 to 290 and 298 to 301; these read CGNC and CAGC. Residues 287-301 are fe-S binding site B; sequence CGNCALGDAFRCAGC.

This sequence belongs to the anamorsin family. In terms of assembly, monomer. Interacts with tah18. Interacts with mia40. Requires [2Fe-2S] cluster as cofactor. [4Fe-4S] cluster is required as a cofactor.

The protein resides in the cytoplasm. The protein localises to the mitochondrion intermembrane space. Functionally, component of the cytosolic iron-sulfur (Fe-S) protein assembly (CIA) machinery required for the maturation of extramitochondrial Fe-S proteins. Part of an electron transfer chain functioning in an early step of cytosolic Fe-S biogenesis, facilitating the de novo assembly of a [4Fe-4S] cluster on the scaffold complex cfd1-nbp35. Electrons are transferred to dre2 from NADPH via the FAD- and FMN-containing protein tah18. Tah18-dre2 are also required for the assembly of the diferric tyrosyl radical cofactor of ribonucleotide reductase (RNR), probably by providing electrons for reduction during radical cofactor maturation in the catalytic small subunit rnr2. This Aspergillus niger (strain ATCC MYA-4892 / CBS 513.88 / FGSC A1513) protein is Fe-S cluster assembly protein dre2.